We begin with the raw amino-acid sequence, 179 residues long: ATP synthase subunit delta (179 aa).

The protein belongs to the ATPase delta chain family. F-type ATPases have 2 components, F(1) - the catalytic core - and F(0) - the membrane proton channel. F(1) has five subunits: alpha(3), beta(3), gamma(1), delta(1), epsilon(1). F(0) has three main subunits: a(1), b(2) and c(10-14). The alpha and beta chains form an alternating ring which encloses part of the gamma chain. F(1) is attached to F(0) by a central stalk formed by the gamma and epsilon chains, while a peripheral stalk is formed by the delta and b chains.

It is found in the cell inner membrane. Functionally, f(1)F(0) ATP synthase produces ATP from ADP in the presence of a proton or sodium gradient. F-type ATPases consist of two structural domains, F(1) containing the extramembraneous catalytic core and F(0) containing the membrane proton channel, linked together by a central stalk and a peripheral stalk. During catalysis, ATP synthesis in the catalytic domain of F(1) is coupled via a rotary mechanism of the central stalk subunits to proton translocation. This protein is part of the stalk that links CF(0) to CF(1). It either transmits conformational changes from CF(0) to CF(1) or is implicated in proton conduction. This chain is ATP synthase subunit delta, found in Burkholderia mallei (strain SAVP1).